The following is a 203-amino-acid chain: Glycerol-3-phosphate acyltransferase (203 aa).

A run of 4 helical transmembrane segments spans residues 4 to 24 (LTFA…AVLI), 68 to 88 (IPVY…FIGI), 104 to 124 (GGKG…DMGS), and 125 to 145 (FMIV…LAAI).

Belongs to the PlsY family. In terms of assembly, probably interacts with PlsX.

The protein localises to the cell inner membrane. The catalysed reaction is an acyl phosphate + sn-glycerol 3-phosphate = a 1-acyl-sn-glycero-3-phosphate + phosphate. It functions in the pathway lipid metabolism; phospholipid metabolism. Catalyzes the transfer of an acyl group from acyl-phosphate (acyl-PO(4)) to glycerol-3-phosphate (G3P) to form lysophosphatidic acid (LPA). This enzyme utilizes acyl-phosphate as fatty acyl donor, but not acyl-CoA or acyl-ACP. This Tolumonas auensis (strain DSM 9187 / NBRC 110442 / TA 4) protein is Glycerol-3-phosphate acyltransferase.